We begin with the raw amino-acid sequence, 698 residues long: SHC SH2 domain-binding protein 1 homolog B (698 aa).

3 PbH1 repeats span residues 480-502 (CAEL…EIYP), 503-524 (GSKC…LIKD), and 532-554 (IPKI…VLVK).

The protein localises to the midbody. The protein resides in the cytoplasm. Its subcellular location is the cytoskeleton. It is found in the spindle. Functionally, may play a role in signaling pathways governing cellular proliferation. This Xenopus laevis (African clawed frog) protein is SHC SH2 domain-binding protein 1 homolog B (shcbp1-b).